Here is a 738-residue protein sequence, read N- to C-terminus: Exocyst complex component 3 (738 aa).

Positions 28–91 (LEKVEQYRHR…DEVERLLRGV (64 aa)) form a coiled coil.

This sequence belongs to the SEC6 family. The exocyst complex is composed of Sec3/Exoc1, Sec5/Exoc2, Sec6/Exoc3, Sec8/Exoc4, Sec10/Exoc5, Sec15/Exoc6, Exo70/Exoc7 and Exo84/Exoc8.

In terms of biological role, component of the exocyst complex involved in the docking of exocytic vesicles with fusion sites on the plasma membrane. This Drosophila melanogaster (Fruit fly) protein is Exocyst complex component 3.